The following is a 203-amino-acid chain: Ras-like protein 1 (203 aa).

A GTP-binding site is contributed by 17 to 24 (GGGGVGKS). The Effector region motif lies at 39–47 (YDPTIEDSY). GTP is bound by residues 64-68 (DTAGQ) and 123-126 (NKCD). C200 carries the cysteine methyl ester modification. Residue C200 is the site of S-farnesyl cysteine attachment. The propeptide at 201-203 (ILM) is removed in mature form.

Belongs to the small GTPase superfamily. Ras family.

It is found in the cell membrane. The catalysed reaction is GTP + H2O = GDP + phosphate + H(+). With respect to regulation, alternates between an inactive form bound to GDP and an active form bound to GTP. Activated by a guanine nucleotide-exchange factor (GEF) and inactivated by a GTPase-activating protein (GAP). This is Ras-like protein 1 (RAS1) from Mucor circinelloides f. lusitanicus (Mucor racemosus var. lusitanicus).